The sequence spans 904 residues: Protein argonaute 4A (904 aa).

Disordered stretches follow at residues 1–33 (MESNSGEIEELPPPPPLPPNAEPIKTDDTKKLS) and 143–166 (KSSANGGSPGNDSPGNDRKRVRRP). A compositionally biased stretch (pro residues) spans 11 to 21 (LPPPPPLPPNA). The segment covering 144–156 (SSANGGSPGNDSP) has biased composition (low complexity). The region spanning 274-388 (PVVDFLLANQ…FPIELCSLVP (115 aa)) is the PAZ domain. In terms of domain architecture, Piwi spans 557 to 865 (FLLCVLAERK…AAAQVSQFIK (309 aa)). The segment at 871-890 (ETSSSHGGHTSAGSAPVPEL) is disordered. Over residues 872–885 (TSSSHGGHTSAGSA) the composition is skewed to low complexity.

The protein belongs to the argonaute family. Ago subfamily.

Its function is as follows. Probably involved in the RNA silencing pathway. May bind to short RNAs such as microRNAs (miRNAs) or short interfering RNAs (siRNAs), and represses the translation of mRNAs which are complementary to them. The chain is Protein argonaute 4A (AGO4A) from Oryza sativa subsp. japonica (Rice).